The sequence spans 473 residues: Arginine biosynthesis bifunctional protein ArgJ, mitochondrial (473 aa).

Residues Thr201, Lys230, Thr241, Glu328, Asn468, and Thr473 each coordinate substrate. Thr241 acts as the Nucleophile in catalysis.

The protein belongs to the ArgJ family. In terms of assembly, heterodimer of an alpha and a beta chain. The alpha and beta chains are autoproteolytically processed from a single precursor protein within the mitochondrion.

It localises to the mitochondrion matrix. It catalyses the reaction N(2)-acetyl-L-ornithine + L-glutamate = N-acetyl-L-glutamate + L-ornithine. It carries out the reaction L-glutamate + acetyl-CoA = N-acetyl-L-glutamate + CoA + H(+). Its pathway is amino-acid biosynthesis; L-arginine biosynthesis; L-ornithine and N-acetyl-L-glutamate from L-glutamate and N(2)-acetyl-L-ornithine (cyclic): step 1/1. It participates in amino-acid biosynthesis; L-arginine biosynthesis; N(2)-acetyl-L-ornithine from L-glutamate: step 1/4. Catalyzes two activities which are involved in the cyclic version of arginine biosynthesis: the synthesis of acetylglutamate from glutamate and acetyl-CoA, and of ornithine by transacetylation between acetylornithine and glutamate. The protein is Arginine biosynthesis bifunctional protein ArgJ, mitochondrial of Ajellomyces capsulatus (strain G186AR / H82 / ATCC MYA-2454 / RMSCC 2432) (Darling's disease fungus).